The primary structure comprises 597 residues: FERM domain-containing protein 3 (597 aa).

The FERM domain occupies 32–312; that stretch reads MRCTIRLLDD…ENQAFYKYAK (281 aa). The tract at residues 409-435 is disordered; the sequence is SAPLISSSPVKAAQEYEDPPSEEEDKI. A compositionally biased stretch (acidic residues) spans 423 to 432; it reads EYEDPPSEEE. The helical transmembrane segment at 531–551 threads the bilayer; it reads LLVVGLGLLLFVFPLLLLLLE.

The protein localises to the membrane. Functionally, putative tumor suppressor gene that may be implicated in the origin and progression of lung cancer. The protein is FERM domain-containing protein 3 (FRMD3) of Pongo abelii (Sumatran orangutan).